The sequence spans 75 residues: Small ribosomal subunit protein bS18 (75 aa).

Belongs to the bacterial ribosomal protein bS18 family. Part of the 30S ribosomal subunit. Forms a tight heterodimer with protein bS6.

In terms of biological role, binds as a heterodimer with protein bS6 to the central domain of the 16S rRNA, where it helps stabilize the platform of the 30S subunit. The sequence is that of Small ribosomal subunit protein bS18 from Alteromonas mediterranea (strain DSM 17117 / CIP 110805 / LMG 28347 / Deep ecotype).